The chain runs to 582 residues: MSSPNPEDVPRRPEPEPSSSNKKKKKRKWLRQEASIQALTRAGHGALQAGQNHEALNNFQRAFLLASKAPQTRDTPVLQACAFNLGAAYVETGDPARGLELLLRAHPEEKAQGRRHGDQCFNVALAYHALGELPQALAWYHRALGHYQPQGDQGEAWAKMGACYQALGQPELAAHCLQEASQAYAQERQLRAAALALGAAAGCMLKSGRHRVGEVVQVLEKSRRLAERSTERRLLGHLYNDLGLGYSQLQLFPLAVEAFLQALPLCWVPGEQATVLRNLGMAHNALGNYQEAREFHQKAADLHGSVGQRWEQGRSFGSLAFALSQLGDHKAARDNYLHALQAARDSGDMKGQWQACEGLGAAAARLGQYDQALKYYKEALAQCQKEPDSVRERLVAKLADTVRTRLAQVGLVQTHTLTSAPGRLQAPGGASQAEGTPAKAGSSTAGVQHRSSSGWEDEEFEEGHQKKKEERSANVPVRAGPGRPELCFLPGTVNHSHHLASSCPTFTKHTPCRGTVLGKASIYSPGPRAHLPFVGPGPPRAEYPSILVPNGPQANRSSRWPRESLSRSRQRRPMESGICTIV.

Positions 1-31 are disordered; it reads MSSPNPEDVPRRPEPEPSSSNKKKKKRKWLR. TPR repeat units lie at residues 36-69, 79-112, 117-150, 154-187, 236-271, 273-306, 313-346, and 353-386; these read IQAL…ASKA, QACA…EKAQ, GDQC…YQPQ, GEAW…YAQE, GHLY…VPGE, ATVL…HGSV, GRSF…ARDS, and WQAC…CQKE. 2 disordered regions span residues 418–481 and 548–582; these read TSAP…RAGP and VPNG…CTIV. Residues 441-454 show a composition bias toward polar residues; that stretch reads GSSTAGVQHRSSSG. Basic and acidic residues predominate over residues 462-472; it reads EGHQKKKEERS.

This Homo sapiens (Human) protein is Tetratricopeptide repeat protein 24 (TTC24).